The following is a 256-amino-acid chain: 5'-nucleotidase YutF (256 aa).

The protein belongs to the HAD-like hydrolase superfamily. NagD family. Homodimer. The cofactor is Mg(2+).

It localises to the cytoplasm. The catalysed reaction is a ribonucleoside 5'-phosphate + H2O = a ribonucleoside + phosphate. The enzyme catalyses XMP + H2O = xanthosine + phosphate. Its function is as follows. Catalyzes the hydrolysis of various purine and pyrimidine 5'-nucleotides, showing preference for 5'-nucleoside monophosphates and exhibiting the highest catalytic activity toward 5'-XMP. Also shows a relatively high phosphohydrolase activity toward the nucleotide precursors ribose-5-phosphate (R5P) and 5-phosphoribosyl-1-pyrophosphate (PRPP), and toward the non-natural substrate p-nitrophenyl phosphate (pNPP). The chain is 5'-nucleotidase YutF (yutF) from Bacillus subtilis (strain 168).